A 622-amino-acid chain; its full sequence is Solute carrier family 2, facilitated glucose transporter member 12 (622 aa).

Residues 1 to 26 form a disordered region; sequence MVPVENTEGPNLLNQKGREAETEGSC. Residues 1-44 lie on the Cytoplasmic side of the membrane; that stretch reads MVPVENTEGPNLLNQKGREAETEGSCGASGGGHPACAGGPSMFT. A helical transmembrane segment spans residues 45 to 65; that stretch reads FLTSVTAAISGLLVGYELGLI. The Extracellular portion of the chain corresponds to 66 to 84; sequence SGALLQIRTLLALTCHEQE. A helical transmembrane segment spans residues 85 to 105; sequence MVVSSLLIGAFLASLTGGVLI. Over 106-111 the chain is Cytoplasmic; that stretch reads DRYGRR. The helical transmembrane segment at 112–132 threads the bilayer; the sequence is LAIILSSCLLGLGSLVLIMSL. The Extracellular segment spans residues 133 to 141; it reads SYTLLIMGR. Residues 142–162 traverse the membrane as a helical segment; that stretch reads VAIGVSISLSSIATCVYIAEI. Over 163–168 the chain is Cytoplasmic; that stretch reads APQHRR. A helical transmembrane segment spans residues 169 to 189; that stretch reads GLLVSLNELMIVTGILFAYIS. Residues 190–201 are Extracellular-facing; sequence NYAFANISNGWK. The N-linked (GlcNAc...) asparagine glycan is linked to N195. A helical transmembrane segment spans residues 202–222; that stretch reads YMFGLVIPLGVLQAIAMYFLP. Over 223-282 the chain is Cytoplasmic; sequence PSPRFLVMKGQEESAGKVLRKLRVISDTTEELTLIKSSLKDEYQYSFWDLFRSKDNMRTR. A helical membrane pass occupies residues 283–303; it reads ILIGLTLVFFVQTTGQPNILF. At 304–321 the chain is on the extracellular side; that stretch reads YASTVLKSVGFQSNEAAS. Residues 322–342 traverse the membrane as a helical segment; sequence LASTGVGVVKVVSTIPATLLV. At 343–349 the chain is on the cytoplasmic side; it reads DHIGSKT. The chain crosses the membrane as a helical span at residues 350–370; that stretch reads FLCIGSSVMSASLLTMGIVNL. The Extracellular segment spans residues 371–471; sequence NINMNFTNIC…PAAYKWLSLA (101 aa). N-linked (GlcNAc...) asparagine glycosylation is found at N375, N387, N400, and N405. Residues 472–492 traverse the membrane as a helical segment; that stretch reads SLLVYVAAFSIGLGPMPWLVL. Residues 493–503 are Cytoplasmic-facing; the sequence is SEIFPGGIRGR. A helical transmembrane segment spans residues 504-524; the sequence is AMALTSSMNWGVNLLISLTFL. At 525–533 the chain is on the extracellular side; it reads TVTDLIGLS. A helical transmembrane segment spans residues 534–554; sequence WVCFIYTIMSLASLAFVVLFI. The Cytoplasmic portion of the chain corresponds to 555–622; it reads PETKGCSLEQ…GQSQRPSPDT (68 aa).

It belongs to the major facilitator superfamily. Sugar transporter (TC 2.A.1.1) family. Glucose transporter subfamily. In terms of tissue distribution, expressed in skeletal muscle, heart, brain, kidney, spleen, adipose tissues and to a lesser extent in small intestine and lung.

Its subcellular location is the cell membrane. The protein localises to the endomembrane system. It localises to the cytoplasm. The protein resides in the perinuclear region. It catalyses the reaction D-glucose(out) = D-glucose(in). In terms of biological role, insulin-independent facilitative glucose transporter. The sequence is that of Solute carrier family 2, facilitated glucose transporter member 12 from Mus musculus (Mouse).